We begin with the raw amino-acid sequence, 474 residues long: Equilibrative nucleoside transporter 3 (474 aa).

Residues 1–53 (MAIISEDDFRHTSNSTYRTASSSLRADQEALLEKLLDRPPPSLQRPEDRFNGT) lie on the Cytoplasmic side of the membrane. 2 positions are modified to phosphoserine: Ser-21 and Ser-23. A Dileucine internalization motif motif is present at residues 31–32 (LL). Residues 54–74 (YIIFFSLGIGGLLPWNFFVTA) form a helical membrane-spanning segment. The Extracellular portion of the chain corresponds to 75 to 105 (QEYWIFKLSNCSSPAAGEEPKDSDILNYFES). N-linked (GlcNAc...) asparagine glycosylation is present at Asn-84. A helical membrane pass occupies residues 106-126 (YLAVASTVPSVLCLALNFLLV). The Cytoplasmic segment spans residues 127 to 134 (NRVPIRVR). The chain crosses the membrane as a helical span at residues 135-155 (VLASLTVMLAIFIVMTVLVKV). Residues 156-161 (DTSSWT) lie on the Extracellular side of the membrane. Residues 162 to 182 (HSFFTITITCMAILSGTSTIF) traverse the membrane as a helical segment. Over 183-201 (NSSVFGMTGSFPMRNSQAL) the chain is Cytoplasmic. A helical transmembrane segment spans residues 202–222 (ISGGAMGGTLSAVASLVDLAV). Residues 223–230 (ASDVTDST) lie on the Extracellular side of the membrane. The helical transmembrane segment at 231 to 251 (LAFFLTADIFLALCIGLYLLL) threads the bilayer. Residues 252-305 (PRLDYARYYMKPVWPTVFSGEEQLPQDSPSPTSVAPGSSDPQTPPLGPILKKTT) lie on the Cytoplasmic side of the membrane. Residues 272-294 (EEQLPQDSPSPTSVAPGSSDPQT) are disordered. Residues 276-292 (PQDSPSPTSVAPGSSDP) show a composition bias toward polar residues. A helical membrane pass occupies residues 306-326 (GLGFCIIYLFFITSLIFPAIC). The Extracellular portion of the chain corresponds to 327 to 339 (TNIESLSKGSGSP). A helical transmembrane segment spans residues 340 to 357 (WSTKFFVPLTTFLLYNFA). The Cytoplasmic segment spans residues 358–376 (DLCGRQVTAWIQVPGPRSK). A helical membrane pass occupies residues 377-397 (ALPGLALLRTCFVPLFVFCNY). Residues 398-414 (QPRGHLHTVLFQSDVYP) lie on the Extracellular side of the membrane. The chain crosses the membrane as a helical span at residues 415–435 (VLFTSLLGLSNGYLSTLALIY). Residues 436–453 (GPKIVPRELAEATGVVMT) are Cytoplasmic-facing. Residues 454 to 474 (FYMGLGLVLGSACSALLVHLI) traverse the membrane as a helical segment.

It belongs to the SLC29A/ENT transporter (TC 2.A.57) family.

The protein resides in the lysosome membrane. It is found in the late endosome membrane. It localises to the mitochondrion membrane. Its subcellular location is the cell membrane. It catalyses the reaction adenosine(in) = adenosine(out). The enzyme catalyses guanosine(in) = guanosine(out). The catalysed reaction is inosine(in) = inosine(out). It carries out the reaction uridine(out) = uridine(in). It catalyses the reaction cytidine(in) = cytidine(out). The enzyme catalyses thymidine(in) = thymidine(out). The catalysed reaction is 2'-deoxyadenosine(in) = 2'-deoxyadenosine(out). It carries out the reaction 2'-deoxycytidine(in) = 2'-deoxycytidine(out). It catalyses the reaction guanine(out) = guanine(in). The enzyme catalyses uracil(in) = uracil(out). The catalysed reaction is (R)-noradrenaline(out) = (R)-noradrenaline(in). It carries out the reaction dopamine(out) = dopamine(in). It catalyses the reaction serotonin(out) = serotonin(in). The enzyme catalyses tyramine(in) = tyramine(out). The catalysed reaction is ATP(in) = ATP(out). In terms of biological role, uniporter that mediates the facilitative transport of nucleoside across lysosomal and mitochondrial membranes. Functions as a non-electrogenic Na(+)-independent transporter. Substrate transport is pH-dependent and enhanced under acidic condition, probably reflecting the location of the transporter in acidic intracellular compartments. Proton is not a cotransporting ion but most likely change the ionization state of the transporter which dictates transport-permissible/impermissible conformation for nucleoside translocation. May direct the nucleoside transport from lysosomes to cytosol or cytosol to mitochondria to facilitate the fundamental function of salvage synthesis of nucleic acids. Involved in the transport of nucleosides (adenosine, guanosine, uridine, thymidine, cytidine and inosine) and deoxynucleosides (deoxyadenosine, deoxycytidine). Also mediates transport of purine nucleobases (adenine, guanine) and pyrimidine nucleobases (uracil). Also able to transport monoamine neurotransmitters dopamine, serotonin, noradrenaline and tyramine. Capable of transporting ATP. Mediates nucleoside export from lysosomes in macrophages, which regulates macrophage functions and numbers. This chain is Equilibrative nucleoside transporter 3 (SLC29A3), found in Bos taurus (Bovine).